Here is a 1007-residue protein sequence, read N- to C-terminus: Serine/threonine-protein kinase PRP4 homolog (1007 aa).

Residues M1–L104 are disordered. The residue at position 2 (A2) is an N-acetylalanine. Phosphoserine is present on residues S8, S21, S24, and S33. 2 stretches are compositionally biased toward basic residues: residues K40–H60 and K68–K82. The segment covering E83–G92 has biased composition (basic and acidic residues). 2 positions are modified to phosphoserine: S88 and S94. N6-acetyllysine; alternate is present on K100. A Glycyl lysine isopeptide (Lys-Gly) (interchain with G-Cter in SUMO2); alternate cross-link involves residue K100. A Glycyl lysine isopeptide (Lys-Gly) (interchain with G-Cter in SUMO2) cross-link involves residue K112. K118 participates in a covalent cross-link: Glycyl lysine isopeptide (Lys-Gly) (interchain with G-Cter in SUMO2); alternate. K118 participates in a covalent cross-link: Glycyl lysine isopeptide (Lys-Gly) (interchain with G-Cter in SUMO1); alternate. S132 carries the phosphoserine modification. A Phosphotyrosine modification is found at Y141. Disordered stretches follow at residues Y141–E535 and N560–D583. A phosphoserine mark is found at S143, S145, and S167. A compositionally biased stretch (low complexity) spans G158–R169. Residues K171 and K178 each participate in a glycyl lysine isopeptide (Lys-Gly) (interchain with G-Cter in SUMO2) cross-link. Basic residues-rich tracts occupy residues S180–K203 and R215–S231. Residues S240, S242, S258, S278, S292, and S294 each carry the phosphoserine modification. The segment covering R248–K271 has biased composition (basic and acidic residues). Positions S294 to K303 are enriched in basic and acidic residues. Basic residues predominate over residues D304–K315. Over residues R316 to P325 the composition is skewed to basic and acidic residues. Residues S328, S354, S356, S366, and S368 each carry the phosphoserine modification. Residues P342–R367 are compositionally biased toward basic residues. T385 carries the phosphothreonine modification. At S387 the chain carries Phosphoserine. 2 stretches are compositionally biased toward basic and acidic residues: residues R395–R408 and R415–D429. S427, S431, and S437 each carry phosphoserine. Over residues P438–S497 the composition is skewed to basic residues. S518, S519, S520, S565, S569, S576, S578, and S580 each carry phosphoserine. A compositionally biased stretch (acidic residues) spans S518–E535. The span at S562–P581 shows a compositional bias: low complexity. Glycyl lysine isopeptide (Lys-Gly) (interchain with G-Cter in SUMO2) cross-links involve residues K593 and K659. One can recognise a Protein kinase domain in the interval Y687–I1003. ATP-binding positions include T693–V701 and K717. K717 bears the N6-acetyllysine mark. The Proton acceptor role is filled by D815. Y849 carries the post-translational modification Phosphotyrosine. S852 is subject to Phosphoserine.

It belongs to the protein kinase superfamily. CMGC Ser/Thr protein kinase family. As to quaternary structure, interacts with CLK1 C-terminus. Associates with the U5 snRNP and NCOR1 deacetylase complexes. Identified in the spliceosome C complex. In terms of processing, phosphorylated by CLK1. Autophosphorylated; phosphorylation inhibits interaction with its targets, such as PRPF6 or SMARCA4.

It localises to the nucleus. It is found in the chromosome. Its subcellular location is the centromere. The protein localises to the kinetochore. The catalysed reaction is L-seryl-[protein] + ATP = O-phospho-L-seryl-[protein] + ADP + H(+). The enzyme catalyses L-threonyl-[protein] + ATP = O-phospho-L-threonyl-[protein] + ADP + H(+). Functionally, serine/threonine kinase involved in spliceosomal assembly as well as mitosis and signaling regulation. Connects chromatin mediated regulation of transcription and pre-mRNA splicing. During spliceosomal assembly, interacts with and phosphorylates PRPF6 and PRPF31, components of the U4/U6-U5 tri-small nuclear ribonucleoprotein (snRNP), to facilitate the formation of the spliceosome B complex. Plays a role in regulating transcription and the spindle assembly checkpoint (SAC). Associates with U5 snRNP and NCOR1 deacetylase complexes which may allow a coordination of pre-mRNA splicing with chromatin remodeling events involved in transcriptional regulation. Associates and probably phosphorylates SMARCA4 and NCOR1. Phosphorylates SRSF1. Associates with kinetochores during mitosis and is necessary for recruitment and maintenance of the checkpoint proteins such as MAD1L1 and MAD12L1 at the kinetochores. Phosphorylates and regulates the activity of the transcription factors such as ELK1 and KLF13. Phosphorylates nuclear YAP1 and WWTR1/TAZ which induces nuclear exclusion and regulates Hippo signaling pathway, involved in tissue growth control. This Rattus norvegicus (Rat) protein is Serine/threonine-protein kinase PRP4 homolog (Prp4k).